A 394-amino-acid chain; its full sequence is Phosphopentomutase (394 aa).

Mn(2+) contacts are provided by D15, D288, H293, D329, H330, and H341.

This sequence belongs to the phosphopentomutase family. Mn(2+) is required as a cofactor.

Its subcellular location is the cytoplasm. The catalysed reaction is 2-deoxy-alpha-D-ribose 1-phosphate = 2-deoxy-D-ribose 5-phosphate. The enzyme catalyses alpha-D-ribose 1-phosphate = D-ribose 5-phosphate. It functions in the pathway carbohydrate degradation; 2-deoxy-D-ribose 1-phosphate degradation; D-glyceraldehyde 3-phosphate and acetaldehyde from 2-deoxy-alpha-D-ribose 1-phosphate: step 1/2. Functionally, isomerase that catalyzes the conversion of deoxy-ribose 1-phosphate (dRib-1-P) and ribose 1-phosphate (Rib-1-P) to deoxy-ribose 5-phosphate (dRib-5-P) and ribose 5-phosphate (Rib-5-P), respectively. This is Phosphopentomutase from Bacillus licheniformis (strain ATCC 14580 / DSM 13 / JCM 2505 / CCUG 7422 / NBRC 12200 / NCIMB 9375 / NCTC 10341 / NRRL NRS-1264 / Gibson 46).